The following is a 588-amino-acid chain: DNA ligase (588 aa).

Glu-250 contributes to the ATP binding site. Lys-252 serves as the catalytic N6-AMP-lysine intermediate. Residues Arg-257, Arg-272, Glu-302, Phe-342, Arg-417, and Lys-423 each coordinate ATP.

This sequence belongs to the ATP-dependent DNA ligase family. Requires Mg(2+) as cofactor.

It carries out the reaction ATP + (deoxyribonucleotide)n-3'-hydroxyl + 5'-phospho-(deoxyribonucleotide)m = (deoxyribonucleotide)n+m + AMP + diphosphate.. Functionally, DNA ligase that seals nicks in double-stranded DNA during DNA replication, DNA recombination and DNA repair. The protein is DNA ligase of Nitrosopumilus maritimus (strain SCM1).